A 251-amino-acid chain; its full sequence is Phosphate import ATP-binding protein PstB 2 (251 aa).

Positions 5 to 246 (LTTENLSLFY…PVKQETNDYI (242 aa)) constitute an ABC transporter domain. 37-44 (GPSGCGKS) contributes to the ATP binding site.

It belongs to the ABC transporter superfamily. Phosphate importer (TC 3.A.1.7) family. The complex is composed of two ATP-binding proteins (PstB), two transmembrane proteins (PstC and PstA) and a solute-binding protein (PstS).

The protein resides in the cell membrane. It carries out the reaction phosphate(out) + ATP + H2O = ADP + 2 phosphate(in) + H(+). Functionally, part of the ABC transporter complex PstSACB involved in phosphate import. Responsible for energy coupling to the transport system. This is Phosphate import ATP-binding protein PstB 2 from Lactiplantibacillus plantarum (strain ATCC BAA-793 / NCIMB 8826 / WCFS1) (Lactobacillus plantarum).